The chain runs to 377 residues: Nitric oxide reductase FlRd-NAD(+) reductase (377 aa).

Belongs to the FAD-dependent oxidoreductase family. It depends on FAD as a cofactor.

The protein localises to the cytoplasm. The enzyme catalyses 2 reduced [nitric oxide reductase rubredoxin domain] + NAD(+) + H(+) = 2 oxidized [nitric oxide reductase rubredoxin domain] + NADH. It participates in nitrogen metabolism; nitric oxide reduction. One of at least two accessory proteins for anaerobic nitric oxide (NO) reductase. Reduces the rubredoxin moiety of NO reductase. The chain is Nitric oxide reductase FlRd-NAD(+) reductase from Escherichia coli O157:H7.